A 447-amino-acid chain; its full sequence is tRNA-2-methylthio-N(6)-dimethylallyladenosine synthase (447 aa).

The MTTase N-terminal domain maps to 3–120 (KKLYIKTNGC…LPALLNERLE (118 aa)). Cys-12, Cys-49, Cys-83, Cys-157, Cys-161, and Cys-164 together coordinate [4Fe-4S] cluster. The 233-residue stretch at 143 to 375 (RAEGPTAFVS…QNRLLMNAAR (233 aa)) folds into the Radical SAM core domain. The TRAM domain occupies 378-441 (ESMIGSKQKI…PNSLRGRLLE (64 aa)).

The protein belongs to the methylthiotransferase family. MiaB subfamily. In terms of assembly, monomer. It depends on [4Fe-4S] cluster as a cofactor.

The protein localises to the cytoplasm. It catalyses the reaction N(6)-dimethylallyladenosine(37) in tRNA + (sulfur carrier)-SH + AH2 + 2 S-adenosyl-L-methionine = 2-methylsulfanyl-N(6)-dimethylallyladenosine(37) in tRNA + (sulfur carrier)-H + 5'-deoxyadenosine + L-methionine + A + S-adenosyl-L-homocysteine + 2 H(+). In terms of biological role, catalyzes the methylthiolation of N6-(dimethylallyl)adenosine (i(6)A), leading to the formation of 2-methylthio-N6-(dimethylallyl)adenosine (ms(2)i(6)A) at position 37 in tRNAs that read codons beginning with uridine. In Legionella pneumophila (strain Paris), this protein is tRNA-2-methylthio-N(6)-dimethylallyladenosine synthase.